The primary structure comprises 228 residues: Nuclear phosphoprotein UL3 homolog (228 aa).

The protein belongs to the alphaherpesvirinae HHV-1 UL3 family. Post-translationally, phosphorylated.

The protein localises to the host nucleus. The protein is Nuclear phosphoprotein UL3 homolog (MDV015) of Gallus gallus (Chicken).